The following is a 141-amino-acid chain: Hemoglobin subunit alpha-D (141 aa).

The 141-residue stretch at Met-1–Arg-141 folds into the Globin domain. Heme b is bound by residues His-58 and His-87.

This sequence belongs to the globin family. Heterotetramer of two alpha-D chains and two beta chains. As to expression, red blood cells.

Functionally, involved in oxygen transport from the lung to the various peripheral tissues. The chain is Hemoglobin subunit alpha-D (HBAD) from Phasianus colchicus colchicus (Black-necked pheasant).